Reading from the N-terminus, the 400-residue chain is Zinc finger protein 514 (400 aa).

One can recognise a KRAB domain in the interval 1–72; sequence MTFEDVAVEF…EREISTGAHS (72 aa). C2H2-type zinc fingers lie at residues 204-226, 232-254, 260-282, 288-310, 316-338, 344-366, and 372-394; these read CKCNECGKSFHFQSELRRHQRCH, YECSDCGRAFGHISSLIKHQRTH, YECSECGRAFSQSSSLVLHYRFH, YKCNECGRAFGHTSSLIKHQRTH, YECRECGRTFSQSSSLIVHYRFH, YKCNKCGRAFSQSSSLTQHYRFH, and YKCNECGRAFAHTASLIKHQRSH.

Belongs to the krueppel C2H2-type zinc-finger protein family.

The protein resides in the nucleus. In terms of biological role, may be involved in transcriptional regulation. The sequence is that of Zinc finger protein 514 (ZNF514) from Homo sapiens (Human).